Reading from the N-terminus, the 60-residue chain is UPF0434 protein Spro_1718 (60 aa).

Belongs to the UPF0434 family.

The sequence is that of UPF0434 protein Spro_1718 from Serratia proteamaculans (strain 568).